A 102-amino-acid polypeptide reads, in one-letter code: Large ribosomal subunit protein bL21 (102 aa).

The protein belongs to the bacterial ribosomal protein bL21 family. As to quaternary structure, part of the 50S ribosomal subunit. Contacts protein L20.

In terms of biological role, this protein binds to 23S rRNA in the presence of protein L20. This Ehrlichia ruminantium (strain Welgevonden) protein is Large ribosomal subunit protein bL21.